The chain runs to 634 residues: 1-deoxy-D-xylulose-5-phosphate synthase (634 aa).

Thiamine diphosphate-binding positions include His74 and 115–117 (AHS). Residue Asp146 coordinates Mg(2+). Residues 147–148 (GA), Asn176, Tyr283, and Glu365 contribute to the thiamine diphosphate site. A Mg(2+)-binding site is contributed by Asn176.

This sequence belongs to the transketolase family. DXPS subfamily. Homodimer. Mg(2+) is required as a cofactor. Requires thiamine diphosphate as cofactor.

It carries out the reaction D-glyceraldehyde 3-phosphate + pyruvate + H(+) = 1-deoxy-D-xylulose 5-phosphate + CO2. It functions in the pathway metabolic intermediate biosynthesis; 1-deoxy-D-xylulose 5-phosphate biosynthesis; 1-deoxy-D-xylulose 5-phosphate from D-glyceraldehyde 3-phosphate and pyruvate: step 1/1. Catalyzes the acyloin condensation reaction between C atoms 2 and 3 of pyruvate and glyceraldehyde 3-phosphate to yield 1-deoxy-D-xylulose-5-phosphate (DXP). This chain is 1-deoxy-D-xylulose-5-phosphate synthase, found in Burkholderia ambifaria (strain MC40-6).